Here is a 471-residue protein sequence, read N- to C-terminus: ATP synthase subunit beta (471 aa).

An ATP-binding site is contributed by 156–163 (GGAGVGKT).

This sequence belongs to the ATPase alpha/beta chains family. F-type ATPases have 2 components, CF(1) - the catalytic core - and CF(0) - the membrane proton channel. CF(1) has five subunits: alpha(3), beta(3), gamma(1), delta(1), epsilon(1). CF(0) has three main subunits: a(1), b(2) and c(9-12). The alpha and beta chains form an alternating ring which encloses part of the gamma chain. CF(1) is attached to CF(0) by a central stalk formed by the gamma and epsilon chains, while a peripheral stalk is formed by the delta and b chains.

It is found in the cell membrane. The enzyme catalyses ATP + H2O + 4 H(+)(in) = ADP + phosphate + 5 H(+)(out). Produces ATP from ADP in the presence of a proton gradient across the membrane. The catalytic sites are hosted primarily by the beta subunits. This is ATP synthase subunit beta from Staphylococcus carnosus (strain TM300).